A 187-amino-acid polypeptide reads, in one-letter code: Ribonuclease M5 (187 aa).

The 84-residue stretch at 5-88 (KEVIVVEGKD…AFLPRKAGVP (84 aa)) folds into the Toprim domain. The Mg(2+) site is built by E11, D57, and D59.

The protein belongs to the ribonuclease M5 family. Mg(2+) is required as a cofactor.

The protein localises to the cytoplasm. The catalysed reaction is Endonucleolytic cleavage of RNA, removing 21 and 42 nucleotides, respectively, from the 5'- and 3'-termini of a 5S-rRNA precursor.. Functionally, required for correct processing of both the 5' and 3' ends of 5S rRNA precursor. Cleaves both sides of a double-stranded region yielding mature 5S rRNA in one step. The polypeptide is Ribonuclease M5 (Lactiplantibacillus plantarum (strain ATCC BAA-793 / NCIMB 8826 / WCFS1) (Lactobacillus plantarum)).